A 446-amino-acid polypeptide reads, in one-letter code: 3-phosphoshikimate 1-carboxyvinyltransferase (446 aa).

The 3-phosphoshikimate site is built by lysine 26, serine 27, and arginine 31. A phosphoenolpyruvate-binding site is contributed by lysine 26. 2 residues coordinate phosphoenolpyruvate: glycine 100 and arginine 128. 3-phosphoshikimate is bound by residues serine 171, serine 172, glutamine 173, serine 200, glutamate 315, and histidine 344. A phosphoenolpyruvate-binding site is contributed by glutamine 173. Glutamate 315 (proton acceptor) is an active-site residue. Positions 348, 389, and 414 each coordinate phosphoenolpyruvate.

This sequence belongs to the EPSP synthase family. Monomer.

It is found in the cytoplasm. It catalyses the reaction 3-phosphoshikimate + phosphoenolpyruvate = 5-O-(1-carboxyvinyl)-3-phosphoshikimate + phosphate. Its pathway is metabolic intermediate biosynthesis; chorismate biosynthesis; chorismate from D-erythrose 4-phosphate and phosphoenolpyruvate: step 6/7. Catalyzes the transfer of the enolpyruvyl moiety of phosphoenolpyruvate (PEP) to the 5-hydroxyl of shikimate-3-phosphate (S3P) to produce enolpyruvyl shikimate-3-phosphate and inorganic phosphate. The chain is 3-phosphoshikimate 1-carboxyvinyltransferase from Mycolicibacterium gilvum (strain PYR-GCK) (Mycobacterium gilvum (strain PYR-GCK)).